A 110-amino-acid chain; its full sequence is U9-agatoxin-Ao1a (110 aa).

The first 17 residues, 1-17 (MKLLLAIAGLFLVQTLA), serve as a signal peptide directing secretion. Positions 18-38 (EDVRAHEESSFLAAVAPEEQR) are excised as a propeptide. Cystine bridges form between C40–C54, C47–C60, C51–C87, C53–C72, and C62–C70.

Belongs to the neurotoxin 37 family. Expressed by the venom gland.

The protein resides in the secreted. This is U9-agatoxin-Ao1a from Agelena orientalis (Funnel-web spider).